Here is a 513-residue protein sequence, read N- to C-terminus: Pleiotropic regulator 1 (513 aa).

The residue at position 1 (M1) is an N-acetylmethionine. The interval 60-79 is disordered; sequence TSKENLKEKGPQNATDSYPH. S119 carries the post-translational modification Phosphoserine. The interval 136 to 160 is disordered; that stretch reads VDANRTGPAGSEYRHPGASDRSQPT. S200 carries the post-translational modification Phosphoserine. 7 WD repeats span residues 201–240, 243–282, 285–324, 327–366, 369–409, 410–448, and 459–498; these read GHLG…LKLS, GHIS…VIRH, GHLS…SVHT, GHTN…TRVT, NHKK…QNLS, GHNA…NFQR, and DSES…TEET. A Phosphoserine modification is found at S390.

Belongs to the WD repeat PRL1/PRL2 family. Identified in the spliceosome C complex. Component of the PRP19-CDC5L splicing complex composed of a core complex comprising a homotetramer of PRPF19, CDC5L, PLRG1 and BCAS2, and at least three less stably associated proteins CTNNBL1, CWC15 and HSPA8. Interacts (via its WD40 repeat domain) directly with CDC5L (via its C-terminal); the interaction is required for mRNA splicing but not for spliceosome assembly. Component of the minor spliceosome, which splices U12-type introns. Within this complex, interacts with CRIPT. Also interacts directly in the complex with BCAS2 and PRPF19. Interacts with USB1.

The protein resides in the nucleus. The protein localises to the nucleus speckle. Its function is as follows. Involved in pre-mRNA splicing as component of the spliceosome. Component of the PRP19-CDC5L complex that forms an integral part of the spliceosome and is required for activating pre-mRNA splicing. As a component of the minor spliceosome, involved in the splicing of U12-type introns in pre-mRNAs. The protein is Pleiotropic regulator 1 (Plrg1) of Mus musculus (Mouse).